Here is a 1448-residue protein sequence, read N- to C-terminus: Protein clueless (1448 aa).

Disordered regions lie at residues 1 to 96 (MALE…HAEK), 110 to 129 (NANV…ADGD), and 265 to 286 (RTRP…VSDP). 2 stretches are compositionally biased toward low complexity: residues 9-26 (NSNA…TKAS) and 41-66 (NLNP…ADGP). The span at 68 to 77 (AKKKGKKNRN) shows a compositional bias: basic residues. Residues 78–88 (KSPTEPTTEAV) are compositionally biased toward polar residues. Ser-270 carries the phosphoserine modification. Residues 424 to 666 (RAEDAFSSKL…RTFPPDVNFL (243 aa)) form the Clu domain. 3 disordered regions span residues 726 to 773 (SEKS…SGEA), 958 to 1010 (AVSS…SASD), and 1414 to 1448 (GEAE…ATSS). A compositionally biased stretch (basic and acidic residues) spans 748–769 (GAEKPDDKEKKNEEEEKKERST). The segment covering 966–981 (KKRGNGGKHNKHKSSK) has biased composition (basic residues). Low complexity predominate over residues 986 to 1007 (QQQQQTTGNQNGSSSGSSNSSS). Over residues 1419–1429 (AVSKDIKEQPE) the composition is skewed to basic and acidic residues.

This sequence belongs to the CLU family.

The protein resides in the cytoplasm. Functionally, mRNA-binding protein involved in proper cytoplasmic distribution of mitochondria. The sequence is that of Protein clueless from Drosophila melanogaster (Fruit fly).